The chain runs to 235 residues: Cytidylate kinase (235 aa).

16–24 provides a ligand contact to ATP; it reads GPAASGKST.

It belongs to the cytidylate kinase family. Type 1 subfamily.

It localises to the cytoplasm. The catalysed reaction is CMP + ATP = CDP + ADP. It carries out the reaction dCMP + ATP = dCDP + ADP. This is Cytidylate kinase from Chloroherpeton thalassium (strain ATCC 35110 / GB-78).